A 541-amino-acid polypeptide reads, in one-letter code: MPKLLYYAEDARGALQRGVDHLADTVKVTLGPKGRNVVLATSGNKVTITNDGVTIAREIELDERDENLGAQLVKEVATKTNDVAGDGTTTATVLAQAMVREGLRNVAAGANPLALKRGIDAAVTAISDRLLAQAREVATKDEIANVATISAQDPAVGAVIADAFDKVGKDGVITVEESNTMGLELEFVEGLQFDKGYISPYFITDPERMEAVLDNPYILLHEGKISNAMDFVPLLEKVVQAGRPLLVIAEDVEGDALATLVVNKIRGTFSSVAVKAPGFGDRRKAMLGDMAVLTGAQVVSPEVGLKLDEVGLEVLGTARRVRVTRDDTTIVEGGGSAEAIQDRIRQIRAQIDQTDSDWDREKLQERLAKLAGGVAVIRVGAATEVELKEKKHRLEDAVSATRAAIEEGIVAGGGSALLHASSALDSLELTGDEAVGASIVRKAAAEPLRWIAENAGFEGYVVCSRVRDLPVGHGFDAQTGEYTDLVARGIIDPVKVTRSALTNAASVVGLLLTTEAIVVDKPEEKPESAGHNHGHGHHHPH.

ATP contacts are provided by residues 29–32, 86–90, glycine 413, and aspartate 492; these read TLGP and DGTTT.

It belongs to the chaperonin (HSP60) family. As to quaternary structure, forms a cylinder of 14 subunits composed of two heptameric rings stacked back-to-back. Interacts with the co-chaperonin GroES.

It is found in the cytoplasm. It carries out the reaction ATP + H2O + a folded polypeptide = ADP + phosphate + an unfolded polypeptide.. In terms of biological role, together with its co-chaperonin GroES, plays an essential role in assisting protein folding. The GroEL-GroES system forms a nano-cage that allows encapsulation of the non-native substrate proteins and provides a physical environment optimized to promote and accelerate protein folding. The sequence is that of Chaperonin GroEL 2 from Acidothermus cellulolyticus (strain ATCC 43068 / DSM 8971 / 11B).